Here is a 495-residue protein sequence, read N- to C-terminus: Glycerol kinase (495 aa).

An ADP-binding site is contributed by threonine 11. Threonine 11, threonine 12, and serine 13 together coordinate ATP. Position 11 (threonine 11) interacts with sn-glycerol 3-phosphate. Arginine 15 lines the ADP pocket. Residues arginine 81, glutamate 82, tyrosine 133, and aspartate 242 each contribute to the sn-glycerol 3-phosphate site. 5 residues coordinate glycerol: arginine 81, glutamate 82, tyrosine 133, aspartate 242, and glutamine 243. Residues threonine 264 and glycine 307 each contribute to the ADP site. Positions 264, 307, 311, and 408 each coordinate ATP. Glycine 408 provides a ligand contact to ADP.

Belongs to the FGGY kinase family.

It catalyses the reaction glycerol + ATP = sn-glycerol 3-phosphate + ADP + H(+). It functions in the pathway polyol metabolism; glycerol degradation via glycerol kinase pathway; sn-glycerol 3-phosphate from glycerol: step 1/1. Its activity is regulated as follows. Inhibited by fructose 1,6-bisphosphate (FBP). Its function is as follows. Key enzyme in the regulation of glycerol uptake and metabolism. Catalyzes the phosphorylation of glycerol to yield sn-glycerol 3-phosphate. The sequence is that of Glycerol kinase from Geobacter sp. (strain M21).